We begin with the raw amino-acid sequence, 458 residues long: Glutamate--tRNA ligase 2 (458 aa).

The 'HIGH' region motif lies at 20-30; it reads PSPTGLIHVGN. Positions 251 to 255 match the 'KMSKS' region motif; that stretch reads GLSKR. Lysine 254 is an ATP binding site.

The protein belongs to the class-I aminoacyl-tRNA synthetase family. Glutamate--tRNA ligase type 1 subfamily. As to quaternary structure, monomer.

The protein localises to the cytoplasm. It carries out the reaction tRNA(Glu) + L-glutamate + ATP = L-glutamyl-tRNA(Glu) + AMP + diphosphate. Its function is as follows. Catalyzes the attachment of glutamate to tRNA(Glu) in a two-step reaction: glutamate is first activated by ATP to form Glu-AMP and then transferred to the acceptor end of tRNA(Glu). The polypeptide is Glutamate--tRNA ligase 2 (Xanthobacter autotrophicus (strain ATCC BAA-1158 / Py2)).